We begin with the raw amino-acid sequence, 1356 residues long: MAEVKVEVASIDWQKRCLSLETQLFRFRLQASKIRELLADKMQELEQRLLEAEQRAENAETQVGVMEEKIKLSNLKSVDSTGTLHQKYQELLRAVQGKDELISQLQAQLEKQKQTRAEEAKIVQEKAAKIKEWVTVKLAELEMENQQLKTCNQQLVEQVAALQDALEDLRMTPSEELLVVPEGTPERDPVPSGPSDQPVEQDSNPHTQILKVAVPTPSLGTLQSRDSLSEARSLEDLRFSMVHPGETAEAKTLQSHLQKEGSPSQLCMKPGNPKHGSASYRESLVTAQGGTFPGTKTSAREGGPGSSLTLPKVRAPSIPRDSFQVAKRHHSQPQVGPGHCDHVVSIEIGALSALHSPGSSKSEARAKVREEAEKMEMEALPPSGKQEERESLKSRRGELEDVELENKPPTPPLHRFPSWESRIYAMATSGMQLSEVSSRRSNAACYASGPSALAFPGAFSGLVYKNVTVPVYTALKGKATQISNVPFVDESSGSDDDCGSQASFRMSVPCSEYRKTSGLGSPRAIKRGVSMSSLSSEGDYAIPPDACSLDSDYSEPEHKLQRTSSYSTDGEALEKSGYLLKMGSRVKTWKRRWFVLRQGQILYYKSPSDVIRKPQGQVDLNSHCQIVREEEAQTFQLISGNKTYYLTAESPSLLEEWIRVLQSLLKVQVTGPPALHQGGTKPTVKGWLTKVKHGHSKLVWCALVGKTFYYYRSHEDKRPLGCLPVQDAHIEEVDRSCDSDEDYEAGGTGRLLSSHCTLVIHPPEHSPTYLLIGTKHEKDTWLYHLTVAAGGSNAKVGTVYEQLIGKLMDGEGNPDSPLWRHPMLCYSQEGLCASLTTLPSEALQTEALKLFKSCQLFINVPVEAASVDYHVSLAQTALQVCLVHPELQSEIYCQLMKQISCRPPQKYSLMQCWQLLALCAPLFLPQHHFLWYVKQQLQRHADPRSETGQYAIYCQRAVERTLQTGEREARPSRMEVVSILLRNPFHHSLPFSIPVHFANGTYQVVGFDGSSTVDEFLQRLNQETGMRKPSQSGFALFTDDPSGRDLEHCLQGRVKICDAISKWEQTLKELHPGKSEGGTRVVKLMYKNRLYFRSQVKGETERERLLLAFQASGEIVAGRFPVTKELALEMAALMAQVEYGDLEKPTLPGPGGTPPTKAQHLLQQVLDRFYPRRYRNGAPPEQLRHLADMMATKWAALQGCSPPECIRIYLTVARKWPLFGAKLFAAQPAQLSPKENTVVWIAVNEDGVSILDHRTMQVNITYPYSSVTTFGGCRDDFMLVIRSIPDQSSGKTRIDKLTFRMPAPKITETTLMMASYMNHCSATVNLSAKLPAARQPRDLDGQFFASVSCTKGSALL.

The stretch at 27-172 (FRLQASKIRE…QDALEDLRMT (146 aa)) forms a coiled coil. Disordered stretches follow at residues 179 to 203 (VVPE…EQDS), 256 to 314 (HLQK…PKVR), and 354 to 414 (LHSP…PPLH). Composition is skewed to polar residues over residues 194 to 203 (PSDQPVEQDS), 256 to 265 (HLQKEGSPSQ), and 285 to 297 (VTAQ…GTKT). Positions 359-407 (SSKSEARAKVREEAEKMEMEALPPSGKQEERESLKSRRGELEDVELENK) form a coiled coil. Composition is skewed to basic and acidic residues over residues 362–377 (SEAR…KMEM) and 385–399 (KQEE…RGEL). Ser-451 bears the Phosphoserine mark. 2 consecutive PH domains span residues 572–666 (ALEK…SLLK) and 681–790 (KPTV…VAAG). Ser-739 bears the Phosphoserine mark. In terms of domain architecture, MyTH4 spans 826 to 980 (YSQEGLCASL…PSRMEVVSIL (155 aa)). Residues 991-1327 (FSIPVHFANG…NHCSATVNLS (337 aa)) enclose the FERM domain.

In Mus musculus (Mouse), this protein is Pleckstrin homology domain-containing family H member 1 (Plekhh1).